The following is a 184-amino-acid chain: Peptide deformylase (184 aa).

Positions 111 and 154 each coordinate Fe cation. The active site involves Glu155. His158 is a Fe cation binding site.

Belongs to the polypeptide deformylase family. Requires Fe(2+) as cofactor.

The catalysed reaction is N-terminal N-formyl-L-methionyl-[peptide] + H2O = N-terminal L-methionyl-[peptide] + formate. Functionally, removes the formyl group from the N-terminal Met of newly synthesized proteins. Requires at least a dipeptide for an efficient rate of reaction. N-terminal L-methionine is a prerequisite for activity but the enzyme has broad specificity at other positions. This Lactobacillus delbrueckii subsp. bulgaricus (strain ATCC 11842 / DSM 20081 / BCRC 10696 / JCM 1002 / NBRC 13953 / NCIMB 11778 / NCTC 12712 / WDCM 00102 / Lb 14) protein is Peptide deformylase.